The chain runs to 307 residues: Stage III sporulation protein AA (307 aa).

143-150 (GPPQTGKT) provides a ligand contact to ATP.

The sequence is that of Stage III sporulation protein AA (spoIIIAA) from Bacillus subtilis (strain 168).